Consider the following 605-residue polypeptide: DNA mismatch repair protein MutL (605 aa).

It belongs to the DNA mismatch repair MutL/HexB family.

This protein is involved in the repair of mismatches in DNA. It is required for dam-dependent methyl-directed DNA mismatch repair. May act as a 'molecular matchmaker', a protein that promotes the formation of a stable complex between two or more DNA-binding proteins in an ATP-dependent manner without itself being part of a final effector complex. This Methylocella silvestris (strain DSM 15510 / CIP 108128 / LMG 27833 / NCIMB 13906 / BL2) protein is DNA mismatch repair protein MutL.